The sequence spans 117 residues: Large ribosomal subunit protein bL19 (117 aa).

The protein belongs to the bacterial ribosomal protein bL19 family.

This protein is located at the 30S-50S ribosomal subunit interface and may play a role in the structure and function of the aminoacyl-tRNA binding site. This is Large ribosomal subunit protein bL19 from Shewanella baltica (strain OS155 / ATCC BAA-1091).